The chain runs to 337 residues: Acetyl-coenzyme A synthetase (337 aa).

CoA-binding positions include 131 to 134 (RGGR), T249, and N273. Position 325-327 (325-327 (GEP)) interacts with ATP.

Belongs to the ATP-dependent AMP-binding enzyme family. Requires Mg(2+) as cofactor. Acetylated. Deacetylation by the SIR2-homolog deacetylase activates the enzyme.

The catalysed reaction is acetate + ATP + CoA = acetyl-CoA + AMP + diphosphate. Its function is as follows. Catalyzes the conversion of acetate into acetyl-CoA (AcCoA), an essential intermediate at the junction of anabolic and catabolic pathways. AcsA undergoes a two-step reaction. In the first half reaction, AcsA combines acetate with ATP to form acetyl-adenylate (AcAMP) intermediate. In the second half reaction, it can then transfer the acetyl group from AcAMP to the sulfhydryl group of CoA, forming the product AcCoA. The protein is Acetyl-coenzyme A synthetase (acsA) of Nostoc linckia.